Consider the following 475-residue polypeptide: Peroxisome proliferator-activated receptor gamma (475 aa).

Phosphoserine; by MAPK is present on S82. The segment at residues 106-180 (AIECRVCSDK…VGMSHNAIRF (75 aa)) is a DNA-binding region (nuclear receptor). NR C4-type zinc fingers lie at residues 109–129 (CRVCSDKASGFHYGVHACEGC) and 146–168 (CDLNCRIHKKSRNKCQYCRFQKC). The interaction with FAM120B stretch occupies residues 175 to 250 (HNAIRFGRMP…DKSPFVIYDM (76 aa)). The NR LBD domain occupies 208–473 (DLRALAKHLY…HPLLQEIYKD (266 aa)). Residue K222 forms a Glycyl lysine isopeptide (Lys-Gly) (interchain with G-Cter in ubiquitin) linkage. Residues 465 to 473 (PLLQEIYKD) carry the 9aaTAD motif.

It belongs to the nuclear hormone receptor family. NR1 subfamily. Interacts with FOXO1 (acetylated form). Heterodimer with other nuclear receptors, such as RXRA. The heterodimer with the retinoic acid receptor RXRA is called adipocyte-specific transcription factor ARF6. Interacts with NCOA6 coactivator, leading to a strong increase in transcription of target genes. Interacts with coactivator PPARBP, leading to a mild increase in transcription of target genes. Interacts with NOCA7 in a ligand-inducible manner. Interacts with NCOA1 and NCOA2 LXXLL motifs. Interacts with ASXL1, ASXL2, DNTTIP2, FAM120B, MAP2K1/MEK1, NR0B2, PDPK1, PRDM16, PRMT2 and TGFB1I1. Interacts (when activated by agonist) with PPP5C. Interacts with HELZ2 and THRAP3; the interaction stimulates the transcriptional activity of PPARG. Interacts with PER2, the interaction is ligand dependent and blocks PPARG recruitment to target promoters. Interacts with NOCT. Interacts with ACTN4. Interacts (when in the liganded conformation) with GPS2. Interacts with CRY1 and CRY2 in a ligand-dependent manner. In the absence of hormonal ligand, interacts with TACC1. In macrophages, interacts with PAQR3 and STUB1; the interactions promote PPARG poylubiquitination and STUB1-mediated degradation. Phosphorylated at basal conditions and dephosphorylated when treated with the ligand. May be dephosphorylated by PPP5C. The phosphorylated form may be inactive and dephosphorylation induces adipogenic activity. Post-translationally, ubiquitinated by E3 ubiquitin-protein ligase complex containing FBXO9; leading to proteasomal degradation. Ubiquitinated at Lys-222 by TRIM55 leading to proteasomal degradation. Ubiquitinated by E3 ubiquitin-protein ligase STUB1/CHIP; leading to proteasomal degradation.

It localises to the nucleus. It is found in the cytoplasm. With respect to regulation, PDPK1 activates its transcriptional activity independently of its kinase activity. Its function is as follows. Nuclear receptor that binds peroxisome proliferators such as hypolipidemic drugs and fatty acids. Once activated by a ligand, the nuclear receptor binds to DNA specific PPAR response elements (PPRE) and modulates the transcription of its target genes, such as acyl-CoA oxidase. It therefore controls the peroxisomal beta-oxidation pathway of fatty acids. Key regulator of adipocyte differentiation and glucose homeostasis. ARF6 acts as a key regulator of the tissue-specific adipocyte P2 (aP2) enhancer. Acts as a critical regulator of gut homeostasis by suppressing NF-kappa-B-mediated pro-inflammatory responses. Plays a role in the regulation of cardiovascular circadian rhythms by regulating the transcription of BMAL1 in the blood vessels. This Oryctolagus cuniculus (Rabbit) protein is Peroxisome proliferator-activated receptor gamma (PPARG).